The sequence spans 179 residues: UPF0200 protein TV0279 (179 aa).

Position 6-13 (6-13 (GMPGAGKD)) interacts with ATP.

This sequence belongs to the UPF0200 family.

This chain is UPF0200 protein TV0279, found in Thermoplasma volcanium (strain ATCC 51530 / DSM 4299 / JCM 9571 / NBRC 15438 / GSS1).